Consider the following 1012-residue polypeptide: Translation initiation factor IF-2, chloroplastic (1012 aa).

Residues 75-102 are compositionally biased toward low complexity; sequence GNSVSLDSNSNSSSSSKSGGDDGTGFVL. Disordered stretches follow at residues 75–132, 147–294, and 319–340; these read GNSV…VEER, EKLG…KEKK, and APPK…RKKG. Over residues 152-175 the composition is skewed to polar residues; it reads SKVNGDKNNGSVNKPVRNNANASP. Residues 183–194 are compositionally biased toward low complexity; that stretch reads SAASLKSKTLKS. Over residues 208 to 231 the composition is skewed to basic and acidic residues; the sequence is VVKEVPKPSYNKNEEEKSQTRGGE. A compositionally biased stretch (pro residues) spans 240 to 257; sequence PQPPSKPQPLKPQQPSKP. Over residues 277-294 the composition is skewed to basic and acidic residues; the sequence is VLRDKGAAETSVKSKEKK. In terms of domain architecture, tr-type G spans 488–661; sequence DRPPVITIMG…MLVAELQELK (174 aa). The interval 497–504 is G1; sequence GHVDHGKT. Residue 497–504 coordinates GTP; sequence GHVDHGKT. Positions 522-526 are G2; the sequence is GITQG. The tract at residues 547 to 550 is G3; the sequence is DTPG. GTP contacts are provided by residues 547–551 and 601–604; these read DTPGH and NKID. Residues 601–604 are G4; sequence NKID. The interval 637–639 is G5; that stretch reads SAL.

Belongs to the TRAFAC class translation factor GTPase superfamily. Classic translation factor GTPase family. IF-2 subfamily.

It localises to the plastid. Its subcellular location is the chloroplast. One of the essential components for the initiation of protein synthesis. Protects formylmethionyl-tRNA from spontaneous hydrolysis and promotes its binding to the 30S ribosomal subunits. Also involved in the hydrolysis of GTP during the formation of the 70S ribosomal complex. This is Translation initiation factor IF-2, chloroplastic (IF2CP) from Phaseolus vulgaris (Kidney bean).